Here is a 284-residue protein sequence, read N- to C-terminus: D-tagatose-1,6-bisphosphate aldolase subunit GatY (284 aa).

The active-site Proton donor is D82. Zn(2+) is bound by residues H83 and H180. Position 181 (G181) interacts with dihydroxyacetone phosphate. H208 is a Zn(2+) binding site. Dihydroxyacetone phosphate is bound by residues G209–S211 and N230–T233.

Belongs to the class II fructose-bisphosphate aldolase family. TagBP aldolase GatY subfamily. Forms a complex with GatZ. Zn(2+) serves as cofactor.

The enzyme catalyses D-tagatofuranose 1,6-bisphosphate = D-glyceraldehyde 3-phosphate + dihydroxyacetone phosphate. The protein operates within carbohydrate metabolism; D-tagatose 6-phosphate degradation; D-glyceraldehyde 3-phosphate and glycerone phosphate from D-tagatose 6-phosphate: step 2/2. Its function is as follows. Catalytic subunit of the tagatose-1,6-bisphosphate aldolase GatYZ, which catalyzes the reversible aldol condensation of dihydroxyacetone phosphate (DHAP or glycerone-phosphate) with glyceraldehyde 3-phosphate (G3P) to produce tagatose 1,6-bisphosphate (TBP). Requires GatZ subunit for full activity and stability. Is involved in the catabolism of galactitol. The chain is D-tagatose-1,6-bisphosphate aldolase subunit GatY from Salmonella paratyphi B (strain ATCC BAA-1250 / SPB7).